We begin with the raw amino-acid sequence, 400 residues long: NADH-ubiquinone oxidoreductase 49 kDa subunit (400 aa).

This sequence belongs to the complex I 49 kDa subunit family.

The protein resides in the mitochondrion. The enzyme catalyses a ubiquinone + NADH + 5 H(+)(in) = a ubiquinol + NAD(+) + 4 H(+)(out). Core subunit of the mitochondrial membrane respiratory chain NADH dehydrogenase (Complex I) that is believed to belong to the minimal assembly required for catalysis. Complex I functions in the transfer of electrons from NADH to the respiratory chain. The immediate electron acceptor for the enzyme is believed to be ubiquinone. Component of the iron-sulfur (IP) fragment of the enzyme. Component of the iron-sulfur (IP) fragment of the enzyme. In Prototheca wickerhamii, this protein is NADH-ubiquinone oxidoreductase 49 kDa subunit (NAD7).